We begin with the raw amino-acid sequence, 156 residues long: ATP synthase subunit b (156 aa).

Residues 11 to 31 (AIAFVLFVLFCMKYVWPPLMA) form a helical membrane-spanning segment.

This sequence belongs to the ATPase B chain family. In terms of assembly, F-type ATPases have 2 components, F(1) - the catalytic core - and F(0) - the membrane proton channel. F(1) has five subunits: alpha(3), beta(3), gamma(1), delta(1), epsilon(1). F(0) has three main subunits: a(1), b(2) and c(10-14). The alpha and beta chains form an alternating ring which encloses part of the gamma chain. F(1) is attached to F(0) by a central stalk formed by the gamma and epsilon chains, while a peripheral stalk is formed by the delta and b chains.

The protein localises to the cell inner membrane. In terms of biological role, f(1)F(0) ATP synthase produces ATP from ADP in the presence of a proton or sodium gradient. F-type ATPases consist of two structural domains, F(1) containing the extramembraneous catalytic core and F(0) containing the membrane proton channel, linked together by a central stalk and a peripheral stalk. During catalysis, ATP synthesis in the catalytic domain of F(1) is coupled via a rotary mechanism of the central stalk subunits to proton translocation. Functionally, component of the F(0) channel, it forms part of the peripheral stalk, linking F(1) to F(0). In Shigella boydii serotype 18 (strain CDC 3083-94 / BS512), this protein is ATP synthase subunit b.